We begin with the raw amino-acid sequence, 325 residues long: Holliday junction branch migration complex subunit RuvB (325 aa).

Positions Met-1–Tyr-180 are large ATPase domain (RuvB-L). ATP contacts are provided by residues Leu-19, Arg-20, Gly-61, Lys-64, Thr-65, Thr-66, Glu-127–Phe-129, Arg-170, Tyr-180, and Arg-217. Thr-65 provides a ligand contact to Mg(2+). The tract at residues Ser-181–Gly-251 is small ATPAse domain (RuvB-S). Positions Lys-254–His-325 are head domain (RuvB-H). Arg-290, Arg-309, and Arg-314 together coordinate DNA.

Belongs to the RuvB family. As to quaternary structure, homohexamer. Forms an RuvA(8)-RuvB(12)-Holliday junction (HJ) complex. HJ DNA is sandwiched between 2 RuvA tetramers; dsDNA enters through RuvA and exits via RuvB. An RuvB hexamer assembles on each DNA strand where it exits the tetramer. Each RuvB hexamer is contacted by two RuvA subunits (via domain III) on 2 adjacent RuvB subunits; this complex drives branch migration. In the full resolvosome a probable DNA-RuvA(4)-RuvB(12)-RuvC(2) complex forms which resolves the HJ.

It localises to the cytoplasm. It carries out the reaction ATP + H2O = ADP + phosphate + H(+). Its function is as follows. The RuvA-RuvB-RuvC complex processes Holliday junction (HJ) DNA during genetic recombination and DNA repair, while the RuvA-RuvB complex plays an important role in the rescue of blocked DNA replication forks via replication fork reversal (RFR). RuvA specifically binds to HJ cruciform DNA, conferring on it an open structure. The RuvB hexamer acts as an ATP-dependent pump, pulling dsDNA into and through the RuvAB complex. RuvB forms 2 homohexamers on either side of HJ DNA bound by 1 or 2 RuvA tetramers; 4 subunits per hexamer contact DNA at a time. Coordinated motions by a converter formed by DNA-disengaged RuvB subunits stimulates ATP hydrolysis and nucleotide exchange. Immobilization of the converter enables RuvB to convert the ATP-contained energy into a lever motion, pulling 2 nucleotides of DNA out of the RuvA tetramer per ATP hydrolyzed, thus driving DNA branch migration. The RuvB motors rotate together with the DNA substrate, which together with the progressing nucleotide cycle form the mechanistic basis for DNA recombination by continuous HJ branch migration. Branch migration allows RuvC to scan DNA until it finds its consensus sequence, where it cleaves and resolves cruciform DNA. The chain is Holliday junction branch migration complex subunit RuvB from Orientia tsutsugamushi (strain Ikeda) (Rickettsia tsutsugamushi).